The sequence spans 541 residues: Chaperonin GroEL (541 aa).

Residues 29 to 32, 86 to 90, glycine 413, 480 to 482, and aspartate 496 each bind ATP; these read TLGP, DGTTT, and NAA.

Belongs to the chaperonin (HSP60) family. Forms a cylinder of 14 subunits composed of two heptameric rings stacked back-to-back. Interacts with the co-chaperonin GroES.

Its subcellular location is the cytoplasm. It carries out the reaction ATP + H2O + a folded polypeptide = ADP + phosphate + an unfolded polypeptide.. Its function is as follows. Together with its co-chaperonin GroES, plays an essential role in assisting protein folding. The GroEL-GroES system forms a nano-cage that allows encapsulation of the non-native substrate proteins and provides a physical environment optimized to promote and accelerate protein folding. This Gardnerella vaginalis protein is Chaperonin GroEL.